The following is a 373-amino-acid chain: MTGWSCLVTGAGGFLGQRIVRLLVEEKELKEIRVLDKAFRPELREEFSKLQNKTKLTVLEGDILDEPFLKRACQDVSVVIHTACIIDVFGVTHRESIMNVNVKGTQLLLEACVQASVPVFIYTSTLEVAGPNSYKEIIQNGHEEEPLENTWPAPYPYSKKLAEKAVLAANGWTLKNGGTLYTCALRPMYIYGEGGPFLSASINEALNNNGILSSVGKFSTVNPVYVGNVAWAHILALRALRDPKKAPSVQGQFYYISDDTPHQSYDNLNYILSKEFGLCLDSRWSLPLALMYWIGFLLEVVSFLLSPVYSYQPPFNRHTVTLSNSVFTFSYKKAQRDLAYKPLYSWEEAKQKTVEWVGSLVDRHKETLKSKTQ.

Residues 10 to 15, Y155, and K159 contribute to the NADP(+) site; that span reads GAGGFL. K159 (proton donor) is an active-site residue. Residues 288–308 traverse the membrane as a helical segment; sequence LALMYWIGFLLEVVSFLLSPV.

It belongs to the 3-beta-HSD family. In terms of tissue distribution, adrenal glands, testes and ovaries.

The protein resides in the endoplasmic reticulum membrane. The protein localises to the mitochondrion membrane. The enzyme catalyses a 3beta-hydroxy-Delta(5)-steroid + NAD(+) = a 3-oxo-Delta(5)-steroid + NADH + H(+). It catalyses the reaction pregnenolone + NAD(+) = pregn-5-ene-3,20-dione + NADH + H(+). It carries out the reaction 3beta-hydroxyandrost-5-en-17-one + NAD(+) = androst-5-ene-3,17-dione + NADH + H(+). The catalysed reaction is androst-5-en-3beta,17beta-diol + NAD(+) = 17beta-hydroxy-androst-5-en-3-one + NADH + H(+). The enzyme catalyses a 3beta-hydroxysteroid + NADP(+) = a 3-oxosteroid + NADPH + H(+). It catalyses the reaction 5alpha-androstane-3beta,17beta-diol + NADP(+) = 17beta-hydroxy-5alpha-androstan-3-one + NADPH + H(+). It carries out the reaction 3beta-hydroxy-5alpha-androstan-17-one + NADP(+) = 5alpha-androstan-3,17-dione + NADPH + H(+). The catalysed reaction is a 3-oxo-Delta(5)-steroid = a 3-oxo-Delta(4)-steroid. The enzyme catalyses pregn-5-ene-3,20-dione = progesterone. It catalyses the reaction androst-5-ene-3,17-dione = androst-4-ene-3,17-dione. It carries out the reaction 17beta-hydroxy-androst-5-en-3-one = testosterone. The catalysed reaction is 5alpha-androstane-3beta,17beta-diol + NAD(+) = 17beta-hydroxy-5alpha-androstan-3-one + NADH + H(+). It functions in the pathway steroid hormone biosynthesis. It participates in steroid metabolism. In terms of biological role, a bifunctional enzyme responsible for the oxidation and isomerization of 3beta-hydroxy-Delta(5)-steroid precursors to 3-oxo-Delta(4)-steroids, an essential step in steroid hormone biosynthesis. Specifically catalyzes the conversion of pregnenolone to progesterone, 17alpha-hydroxypregnenolone to 17alpha-hydroxyprogesterone, dehydroepiandrosterone (DHEA) to 4-androstenedione and androstenediol to testosterone. Additionally, catalyzes the interconversion between 3beta-hydroxy and 3-oxo-5alpha-androstane steroids controlling the bioavalability of the active forms. Specifically converts dihydrotestosterone to its inactive form 5alpha-androstanediol, that does not bind androgen receptor/AR. Also converts androstanedione, a precursor of testosterone and estrone, to epiandrosterone. Expected to use NAD(+) as preferred electron donor for the 3beta-hydroxy-steroid dehydrogenase activity and NADPH for the 3-ketosteroid reductase activity. This is 3 beta-hydroxysteroid dehydrogenase/Delta 5--&gt;4-isomerase type 1 (HSD3B1) from Macaca mulatta (Rhesus macaque).